A 266-amino-acid polypeptide reads, in one-letter code: L-aspartate dehydrogenase (266 aa).

A123 and N189 together coordinate NAD(+). The active site involves H219.

Belongs to the L-aspartate dehydrogenase family.

It carries out the reaction L-aspartate + NADP(+) + H2O = oxaloacetate + NH4(+) + NADPH + H(+). The enzyme catalyses L-aspartate + NAD(+) + H2O = oxaloacetate + NH4(+) + NADH + H(+). The protein operates within cofactor biosynthesis; NAD(+) biosynthesis; iminoaspartate from L-aspartate (dehydrogenase route): step 1/1. Functionally, specifically catalyzes the NAD or NADP-dependent dehydrogenation of L-aspartate to iminoaspartate. The protein is L-aspartate dehydrogenase of Cupriavidus taiwanensis (strain DSM 17343 / BCRC 17206 / CCUG 44338 / CIP 107171 / LMG 19424 / R1) (Ralstonia taiwanensis (strain LMG 19424)).